We begin with the raw amino-acid sequence, 317 residues long: Putative carboxypeptidase RP402 (317 aa).

S125 functions as the Nucleophile in the catalytic mechanism. Catalysis depends on charge relay system residues E225 and H288.

Belongs to the peptidase S66 family.

This Rickettsia prowazekii (strain Madrid E) protein is Putative carboxypeptidase RP402.